Here is a 218-residue protein sequence, read N- to C-terminus: Octanoyltransferase (218 aa).

The 176-residue stretch at 31–206 folds into the BPL/LPL catalytic domain; that stretch reads EETPDEVWLV…ELVNLLGYEQ (176 aa). Residues 70 to 77, 137 to 139, and 150 to 152 each bind substrate; these read RGGQVTYH, SLG, and GLA. Cys-168 serves as the catalytic Acyl-thioester intermediate.

The protein belongs to the LipB family.

It is found in the cytoplasm. It carries out the reaction octanoyl-[ACP] + L-lysyl-[protein] = N(6)-octanoyl-L-lysyl-[protein] + holo-[ACP] + H(+). It participates in protein modification; protein lipoylation via endogenous pathway; protein N(6)-(lipoyl)lysine from octanoyl-[acyl-carrier-protein]: step 1/2. Catalyzes the transfer of endogenously produced octanoic acid from octanoyl-acyl-carrier-protein onto the lipoyl domains of lipoate-dependent enzymes. Lipoyl-ACP can also act as a substrate although octanoyl-ACP is likely to be the physiological substrate. This is Octanoyltransferase from Vibrio vulnificus (strain CMCP6).